A 420-amino-acid chain; its full sequence is Histidine--tRNA ligase, chloroplastic (420 aa).

Belongs to the class-II aminoacyl-tRNA synthetase family.

Its subcellular location is the plastid. It localises to the chloroplast. It catalyses the reaction tRNA(His) + L-histidine + ATP = L-histidyl-tRNA(His) + AMP + diphosphate + H(+). This chain is Histidine--tRNA ligase, chloroplastic, found in Gracilaria tenuistipitata var. liui (Red alga).